A 289-amino-acid polypeptide reads, in one-letter code: Cyclin-dependent kinase inhibitor 4 (289 aa).

Disordered regions lie at residues 1-31 (MGKY…ESSI), 56-160 (LQQQ…VSES), and 227-248 (SESN…TTPE). Over residues 13–28 (AGAGAGGGGGGGGGGE) the composition is skewed to gly residues. Low complexity predominate over residues 56–80 (LQQQQQRCLLQKPSSPSSLPPTSAS). Residues 134-144 (CGRNPNPRSNL) are compositionally biased toward polar residues.

It belongs to the CDI family. ICK/KRP subfamily. In terms of assembly, specifically interacts with CDKA-1, but not with CDKB1-1. Interacts with CYCD4-1. Binds to FBL17. Expressed in leaves and flowers and at lower levels in roots.

The protein resides in the nucleus. Its subcellular location is the nucleoplasm. Functionally, binds and inhibits CYCD2-1/CDKA-1 complex kinase activity. May target specifically CDKA-1. The sequence is that of Cyclin-dependent kinase inhibitor 4 (KRP4) from Arabidopsis thaliana (Mouse-ear cress).